A 205-amino-acid chain; its full sequence is Dihydrofolate reductase (205 aa).

Residues 1-201 form the DHFR domain; the sequence is MLALVVALAS…TSFKMFLYTK (201 aa). Residues A7 and 13–19 each bind NADP(+); that span reads GIGNANA. Substrate is bound at residue 29 to 34; that stretch reads DMAWFR. 62 to 64 contacts NADP(+); the sequence is RRT. Residue R78 coordinates substrate. Residues 84–86 and 118–125 contribute to the NADP(+) site; these read SRG and GGRDVYSL.

Belongs to the dihydrofolate reductase family.

The catalysed reaction is (6S)-5,6,7,8-tetrahydrofolate + NADP(+) = 7,8-dihydrofolate + NADPH + H(+). Its pathway is cofactor biosynthesis; tetrahydrofolate biosynthesis; 5,6,7,8-tetrahydrofolate from 7,8-dihydrofolate: step 1/1. In terms of biological role, key enzyme in folate metabolism. Catalyzes an essential reaction for de novo glycine and purine synthesis, and for DNA precursor synthesis. The polypeptide is Dihydrofolate reductase (DHFR-1) (Encephalitozoon cuniculi (strain GB-M1) (Microsporidian parasite)).